The sequence spans 104 residues: Cell division protein FtsL (104 aa).

At 1–20 (MSKPSLTLPRIVLHDLWQHK) the chain is on the cytoplasmic side. A helical transmembrane segment spans residues 21 to 43 (WILLLALLVLSNAVAVVYTSHVS). At 44–104 (RKLTTEWDQL…PSEEIVVKVP (61 aa)) the chain is on the periplasmic side.

This sequence belongs to the FtsL family. Part of a complex composed of FtsB, FtsL and FtsQ.

The protein localises to the cell inner membrane. Functionally, essential cell division protein. May link together the upstream cell division proteins, which are predominantly cytoplasmic, with the downstream cell division proteins, which are predominantly periplasmic. In Shewanella oneidensis (strain ATCC 700550 / JCM 31522 / CIP 106686 / LMG 19005 / NCIMB 14063 / MR-1), this protein is Cell division protein FtsL.